The following is a 308-amino-acid chain: Glutaminase (308 aa).

Positions 66, 117, 162, 169, 193, 244, and 262 each coordinate substrate.

It belongs to the glutaminase family. As to quaternary structure, homotetramer.

The enzyme catalyses L-glutamine + H2O = L-glutamate + NH4(+). In Natranaerobius thermophilus (strain ATCC BAA-1301 / DSM 18059 / JW/NM-WN-LF), this protein is Glutaminase.